A 74-amino-acid chain; its full sequence is Arabinogalactan protein 20 (74 aa).

An N-terminal signal peptide occupies residues 1–26 (MASRNSVAVIALFAFVFAVISPFAGA). Gln-27 carries the pyrrolidone carboxylic acid modification. Residues Pro-31, Pro-33, and Pro-35 each carry the 4-hydroxyproline modification. O-linked (Ara...) hydroxyproline glycans are attached at residues Pro-31, Pro-33, and Pro-35. Ser-37 is lipidated: GPI-anchor amidated serine. A propeptide spans 38–74 (DGTSIDQGIAYLLMVVALVLTYLIHPLDASSSSYTFF) (removed in mature form).

The protein belongs to the AG-peptide AGP family. Contains 4-hydroxyproline; hydroxylated on Pro-31, Pro-33 and Pro-35. Post-translationally, O-glycosylated on hydroxyprolines; noncontiguous hydroxylproline residues are glycosylated with arabinogalactan.

The protein resides in the cell membrane. Proteoglycan that seems to be implicated in diverse developmental roles such as differentiation, cell-cell recognition, embryogenesis and programmed cell death. The polypeptide is Arabinogalactan protein 20 (Arabidopsis thaliana (Mouse-ear cress)).